Here is a 98-residue protein sequence, read N- to C-terminus: Protein translation factor SUI1 homolog (98 aa).

The protein belongs to the SUI1 family.

The sequence is that of Protein translation factor SUI1 homolog from Thermococcus onnurineus (strain NA1).